The following is a 507-amino-acid chain: Nuclear poly(A) polymerase 3 (507 aa).

ATP contacts are provided by residues 79-81 (YGS), 91-94 (SDID), Asp147, Lys208, Tyr217, and 226-227 (GV). Residues Asp92, Asp94, and Asp147 each coordinate Mg(2+).

Belongs to the poly(A) polymerase family. As to quaternary structure, monomer. Forms a complex with cleavage and polyadenylation specificity factor (CPSF) subunits FIPS5 and CPSF30. It depends on Mg(2+) as a cofactor. The cofactor is Mn(2+). In terms of tissue distribution, expressed in leaves (mostly in petioles and tips), cotyledon, roots (tips, vascular tissue of the radicle, and throughout the root tissue excluding the elongation zone), stems, and flowers (restricted to the stigma and the pollen in mature anthers). Active in the primary and secondary root systems.

The protein localises to the nucleus. The enzyme catalyses RNA(n) + ATP = RNA(n)-3'-adenine ribonucleotide + diphosphate. In terms of biological role, essential protein. Polymerase that creates the 3'-poly(A) tail of mRNA's. Also required for the endoribonucleolytic cleavage reaction at some polyadenylation sites. May acquire specificity through interaction with a cleavage and polyadenylation specificity factor (CPSF) at its C-terminus. This is Nuclear poly(A) polymerase 3 from Arabidopsis thaliana (Mouse-ear cress).